The primary structure comprises 126 residues: uncharacterized protein (126 aa).

Residue T68 is modified to Phosphothreonine.

This is an uncharacterized protein from Pseudomonas aeruginosa (strain UCBPP-PA14).